The sequence spans 847 residues: Leucine--tRNA ligase (847 aa).

Positions 41–51 (PYPSGRIHMGH) match the 'HIGH' region motif. A 'KMSKS' region motif is present at residues 619 to 623 (KMSKS). Residue Lys622 participates in ATP binding.

Belongs to the class-I aminoacyl-tRNA synthetase family.

Its subcellular location is the cytoplasm. It catalyses the reaction tRNA(Leu) + L-leucine + ATP = L-leucyl-tRNA(Leu) + AMP + diphosphate. The sequence is that of Leucine--tRNA ligase from Cereibacter sphaeroides (strain ATCC 17029 / ATH 2.4.9) (Rhodobacter sphaeroides).